The chain runs to 589 residues: Protein kinase G11A (589 aa).

A disordered region spans residues 1–167 (MASKAMPRAP…SACSSISSVT (167 aa)). Composition is skewed to polar residues over residues 15–36 (NLQS…SPSK) and 63–76 (TQHQ…TGSN). Residues 91-100 (RLADEEKGVV) are compositionally biased toward basic and acidic residues. Over residues 142 to 165 (SSSRCRPSTSSDVSDESACSSISS) the composition is skewed to low complexity. In terms of domain architecture, Protein kinase spans 195–533 (FKLLKKLGCG…ATEIKQHPFF (339 aa)). Residues 201–209 (LGCGDIGSV) and Lys-224 contribute to the ATP site. Asp-320 (proton acceptor) is an active-site residue. The interval 551-589 (RPVEIERPPKQPVSTSEPAAAPSDAAQKSSDSYLEFDFF) is disordered.

Belongs to the protein kinase superfamily. Ser/Thr protein kinase family.

It catalyses the reaction L-seryl-[protein] + ATP = O-phospho-L-seryl-[protein] + ADP + H(+). The enzyme catalyses L-threonyl-[protein] + ATP = O-phospho-L-threonyl-[protein] + ADP + H(+). May play a role in the regulation of metabolism and signal transduction processes. The chain is Protein kinase G11A from Oryza sativa subsp. japonica (Rice).